The sequence spans 375 residues: NADH-ubiquinone oxidoreductase 40 kDa subunit, mitochondrial (375 aa).

The transit peptide at 1 to 26 (MAPLTAAMRSTPRIIVSNAFGFQRRA) directs the protein to the mitochondrion.

This sequence belongs to the complex I NDUFA9 subunit family. As to quaternary structure, complex I is composed of about 40 different subunits. FAD is required as a cofactor.

The protein localises to the mitochondrion matrix. Its function is as follows. Accessory subunit of the mitochondrial membrane respiratory chain NADH dehydrogenase (Complex I), that is believed not to be involved in catalysis. Complex I functions in the transfer of electrons from NADH to the respiratory chain. The immediate electron acceptor for the enzyme is believed to be ubiquinone. The protein is NADH-ubiquinone oxidoreductase 40 kDa subunit, mitochondrial (nuo40) of Neurospora crassa (strain ATCC 24698 / 74-OR23-1A / CBS 708.71 / DSM 1257 / FGSC 987).